The chain runs to 272 residues: Protein MGF 110-11L (272 aa).

The chain crosses the membrane as a helical span at residues 1 to 17; sequence MKVLLGLLLGYSVLILA. A glycan (N-linked (GlcNAc...) asparagine; by host) is linked at Asn-68. Helical transmembrane passes span 129-149 and 156-176; these read QFCLYFIIGIAYTGCFVCALC and TTMKLFILLSILVWLAQPVLN. Asn-264 is a glycosylation site (N-linked (GlcNAc...) asparagine; by host).

Belongs to the asfivirus MGF 110 family.

It is found in the host membrane. Its function is as follows. Plays a role in virus cell tropism, and may be required for efficient virus replication in macrophages. This is Protein MGF 110-11L from Ornithodoros (relapsing fever ticks).